A 199-amino-acid polypeptide reads, in one-letter code: NAD(P)H dehydrogenase (quinone) (199 aa).

The Flavodoxin-like domain maps to 4-190 (VLVLYYSAYG…DAARFQGAHV (187 aa)). Residues 10–15 (SAYGHI) and 78–80 (TRY) each bind FMN. Residue Y12 participates in NAD(+) binding. W98 contributes to the substrate binding site. FMN-binding positions include 113–119 (SSATQHG) and H134.

Belongs to the WrbA family. It depends on FMN as a cofactor.

The catalysed reaction is a quinone + NADH + H(+) = a quinol + NAD(+). It carries out the reaction a quinone + NADPH + H(+) = a quinol + NADP(+). This chain is NAD(P)H dehydrogenase (quinone), found in Sinorhizobium fredii (strain NBRC 101917 / NGR234).